The chain runs to 246 residues: DNA polymerase sliding clamp (246 aa).

The protein belongs to the PCNA family. As to quaternary structure, homotrimer. The subunits circularize to form a toroid; DNA passes through its center. Replication factor C (RFC) is required to load the toroid on the DNA.

Functionally, sliding clamp subunit that acts as a moving platform for DNA processing. Responsible for tethering the catalytic subunit of DNA polymerase and other proteins to DNA during high-speed replication. The protein is DNA polymerase sliding clamp of Methanocella arvoryzae (strain DSM 22066 / NBRC 105507 / MRE50).